A 251-amino-acid chain; its full sequence is Dihydroorotate dehydrogenase B (NAD(+)), electron transfer subunit homolog (251 aa).

An FAD-binding FR-type domain is found at 2–101 (LAELNAEVLE…FLPLGKRLFS (100 aa)). Cys217, Cys222, Cys225, and Cys238 together coordinate [2Fe-2S] cluster.

It belongs to the PyrK family. It depends on [2Fe-2S] cluster as a cofactor. FAD serves as cofactor.

The sequence is that of Dihydroorotate dehydrogenase B (NAD(+)), electron transfer subunit homolog from Aquifex aeolicus (strain VF5).